A 166-amino-acid polypeptide reads, in one-letter code: Urease accessory protein UreE (166 aa).

This sequence belongs to the UreE family.

Its subcellular location is the cytoplasm. Functionally, involved in urease metallocenter assembly. Binds nickel. Probably functions as a nickel donor during metallocenter assembly. The protein is Urease accessory protein UreE of Pseudomonas savastanoi pv. phaseolicola (strain 1448A / Race 6) (Pseudomonas syringae pv. phaseolicola (strain 1448A / Race 6)).